The following is a 420-amino-acid chain: Tyrosine-protein phosphatase non-receptor type 20 (420 aa).

Basic and acidic residues predominate over residues 1–11; the sequence is MSSPRDFRAEP. Disordered stretches follow at residues 1–47 and 68–108; these read MSSP…VFEN and DVFE…SQAL. The span at 31-41 shows a compositional bias: polar residues; that stretch reads LPSSSQENTPR. A phosphoserine mark is found at Ser76 and Ser120. One can recognise a Tyrosine-protein phosphatase domain in the interval 159–412; sequence IMQEFMALEL…HFCYDIVLEV (254 aa). Substrate-binding positions include Asp323, 353–359, and Gln397; that span reads CSAGIGR. The Phosphocysteine intermediate role is filled by Cys353.

This sequence belongs to the protein-tyrosine phosphatase family. Non-receptor class subfamily. Present in many cell lines (at protein level). Widely expressed.

Its subcellular location is the nucleus. It is found in the cytoplasm. It localises to the cytoskeleton. The protein localises to the microtubule organizing center. The protein resides in the centrosome. The catalysed reaction is O-phospho-L-tyrosyl-[protein] + H2O = L-tyrosyl-[protein] + phosphate. Its function is as follows. Tyrosine-protein phosphatase targeted to sites of actin polymerization in response of varied extracellular stimuli. Has tyrosine phosphatase activity towards various tyrosyl phosphorylated substrates. This chain is Tyrosine-protein phosphatase non-receptor type 20, found in Homo sapiens (Human).